Reading from the N-terminus, the 332-residue chain is L-lactate dehydrogenase A chain (332 aa).

NAD(+) contacts are provided by residues glycine 29–lysine 57 and arginine 99. Positions 106, 138, and 169 each coordinate substrate. Asparagine 138 is a binding site for NAD(+). Histidine 193 acts as the Proton acceptor in catalysis. Threonine 248 serves as a coordination point for substrate.

The protein belongs to the LDH/MDH superfamily. LDH family. In terms of assembly, homotetramer.

It localises to the cytoplasm. The enzyme catalyses (S)-lactate + NAD(+) = pyruvate + NADH + H(+). Its pathway is fermentation; pyruvate fermentation to lactate; (S)-lactate from pyruvate: step 1/1. In terms of biological role, interconverts simultaneously and stereospecifically pyruvate and lactate with concomitant interconversion of NADH and NAD(+). The polypeptide is L-lactate dehydrogenase A chain (LDHA) (Python regius (Ball python)).